We begin with the raw amino-acid sequence, 316 residues long: Secondary metabolism regulator laeA (316 aa).

The protein belongs to the methyltransferase superfamily. LaeA methyltransferase family. Component of the heterotrimeric velvet complex composed of laeA, ve1 and velB; Ve1 acting as a bridging protein between laeA and velB. Interacts directly with veA.

The protein localises to the nucleus. The protein resides in the cytoplasm. The enzyme catalyses L-methionyl-[protein] + S-adenosyl-L-methionine = S-methyl-L-methionyl-[protein] + S-adenosyl-L-homocysteine. Its function is as follows. Methyltransferase that performs automethylation. No other methyl-accepting substrate has been identified yet. Component of the velvet transcription factor complex that acts as a global regulator for secondary metabolite gene expression. Controls the expression of the mycotoxins trichothecenes and zearalenon gene clusters. Negatively controls perithecial induction, but positively controls virulence toward the host plant. This chain is Secondary metabolism regulator laeA, found in Gibberella zeae (strain ATCC MYA-4620 / CBS 123657 / FGSC 9075 / NRRL 31084 / PH-1) (Wheat head blight fungus).